The primary structure comprises 588 residues: Cyclomaltodextrinase (588 aa).

Substrate is bound by residues histidine 247 and arginine 326. Aspartate 328 functions as the Nucleophile in the catalytic mechanism. Residue glutamate 357 is the Proton donor of the active site. Residues 423–424 (HD), aspartate 468, and arginine 472 each bind substrate.

It belongs to the glycosyl hydrolase 13 family. Exists as a monomer or a homodimer in solution. Homodimer is more active and stable than the monomer.

The enzyme catalyses cyclomaltodextrin + H2O = linear maltodextrin. No metal dependence, but Mn(2+) increases the activity with alpha-cyclodextrin as substrate. No effect on the activity with presence or absence of Ca(2+), Zn(2+), Tween-20 or EDTA. In terms of biological role, hydrolyzes alpha-, beta- and gamma-cyclodextrins with the highest activity with alpha-cyclodextrin (cyclomaltohexaose). Pullulan is the preferred substrate from linear substrates. Maltose is a major product of these reactions. Is also able to hydrolyze maltotriose and acarbose, and transglycosylate their hydrolytic products. Major reaction products of maltotriose and of acarbose are maltose and glucose, and glucose and pseudotrisaccharide, respectively. No activity with glucose or maltose as substrate. The protein is Cyclomaltodextrinase of Geobacillus thermopakistaniensis (strain MAS1).